The chain runs to 479 residues: MSSPGIDGDPKPPCLPRNGLVKLPGQPNGLGAASITKGTPATKNRPCQPPPPPTLPPPSLAAPLSRAALAGGPCTPAGGPASALAPGHPAERPPLATDEKILNGLFWYFSACEKCVLAQVCKAWRRVLYQPKFWAGLTPVLHAKELYNVLPGGEKEFVNLQGFAARGFEGFCLVGVSDLDICEFIDNYALSKKGVKAMSLKRSTITDAGLEVMLEQMQGVVRLELSGCNDFTEAGLWSSLSARITSLSVSDCINVADDAIAAISQLLPNLAELSLQAYHVTDTALAYFTARQGHSTHTLRLLSCWEITNHGVVNVVHSLPNLTALSLSGCSKVTDDGVELVAENLRKLRSLDLSWCPRITDMALEYVACDLHRLEELVLDRCVRITDTGLSYLSTMSSLRSLYLRWCCQVQDFGLKHLLALGSLRLLSLAGCPLLTTTGLSGLVQLQELEELELTNCPGATPELFKYFSQHLPRCLVIE.

A disordered region spans residues 1–62 (MSSPGIDGDP…PTLPPPSLAA (62 aa)). The segment covering 47 to 60 (CQPPPPPTLPPPSL) has biased composition (pro residues). R92 carries the post-translational modification Omega-N-methylarginine. One can recognise an F-box domain in the interval 94 to 139 (PLATDEKILNGLFWYFSACEKCVLAQVCKAWRRVLYQPKFWAGLTP). LRR repeat units follow at residues 244–266 (ITSL…ISQL), 267–290 (LPNL…YFTA), 319–343 (LPNL…LVAE), 345–369 (LRKL…YVAC), 371–395 (LHRL…YLST), 396–420 (MSSL…HLLA), and 446–470 (LQEL…YFSQ).

In terms of assembly, interacts with SKP1 and CUL1.

In terms of biological role, substrate-recognition component of the SCF (SKP1-CUL1-F-box protein)-type E3 ubiquitin ligase complex. This chain is F-box/LRR-repeat protein 16 (FBXL16), found in Homo sapiens (Human).